Here is a 240-residue protein sequence, read N- to C-terminus: Proteasome subunit beta type-1 (240 aa).

N-acetylmethionine is present on M1. The propeptide occupies 1-27; sequence MLSTAAYRDVERELGMGPHGSAGPVQL. An O-linked (GlcNAc) serine glycan is attached at S57. 2 positions are modified to phosphoserine: S61 and S67. Y149 carries the post-translational modification Phosphotyrosine. S161 bears the Phosphoserine mark. K203 is subject to N6-acetyllysine. O-linked (GlcNAc) serine glycosylation occurs at S208.

Belongs to the peptidase T1B family. As to quaternary structure, the 26S proteasome consists of a 20S proteasome core and two 19S regulatory subunits. The 20S proteasome core is a barrel-shaped complex made of 28 subunits that are arranged in four stacked rings. The two outer rings are each formed by seven alpha subunits, and the two inner rings are formed by seven beta subunits. The proteolytic activity is exerted by three beta-subunits PSMB5, PSMB6 and PSMB7. Interacts with SERPINB2. Interacts with RFPL4A. In terms of tissue distribution, detected in liver (at protein level).

It is found in the cytoplasm. The protein resides in the nucleus. Its function is as follows. Non-catalytic component of the 20S core proteasome complex involved in the proteolytic degradation of most intracellular proteins. This complex plays numerous essential roles within the cell by associating with different regulatory particles. Associated with two 19S regulatory particles, forms the 26S proteasome and thus participates in the ATP-dependent degradation of ubiquitinated proteins. The 26S proteasome plays a key role in the maintenance of protein homeostasis by removing misfolded or damaged proteins that could impair cellular functions, and by removing proteins whose functions are no longer required. Associated with the PA200 or PA28, the 20S proteasome mediates ubiquitin-independent protein degradation. This type of proteolysis is required in several pathways including spermatogenesis (20S-PA200 complex) or generation of a subset of MHC class I-presented antigenic peptides (20S-PA28 complex). This is Proteasome subunit beta type-1 (Psmb1) from Mus musculus (Mouse).